The chain runs to 208 residues: ATP-dependent Clp protease proteolytic subunit (208 aa).

Residue Ser105 is the Nucleophile of the active site. Residue His130 is part of the active site.

The protein belongs to the peptidase S14 family. As to quaternary structure, fourteen ClpP subunits assemble into 2 heptameric rings which stack back to back to give a disk-like structure with a central cavity, resembling the structure of eukaryotic proteasomes.

The protein localises to the cytoplasm. The catalysed reaction is Hydrolysis of proteins to small peptides in the presence of ATP and magnesium. alpha-casein is the usual test substrate. In the absence of ATP, only oligopeptides shorter than five residues are hydrolyzed (such as succinyl-Leu-Tyr-|-NHMec, and Leu-Tyr-Leu-|-Tyr-Trp, in which cleavage of the -Tyr-|-Leu- and -Tyr-|-Trp bonds also occurs).. In terms of biological role, cleaves peptides in various proteins in a process that requires ATP hydrolysis. Has a chymotrypsin-like activity. Plays a major role in the degradation of misfolded proteins. This Xanthomonas axonopodis pv. citri (strain 306) protein is ATP-dependent Clp protease proteolytic subunit.